We begin with the raw amino-acid sequence, 142 residues long: UPF0179 protein PYRAB06360 (142 aa).

Belongs to the UPF0179 family.

The polypeptide is UPF0179 protein PYRAB06360 (Pyrococcus abyssi (strain GE5 / Orsay)).